A 377-amino-acid chain; its full sequence is Nitric oxide reductase FlRd-NAD(+) reductase (377 aa).

It belongs to the FAD-dependent oxidoreductase family. FAD is required as a cofactor.

It localises to the cytoplasm. It carries out the reaction 2 reduced [nitric oxide reductase rubredoxin domain] + NAD(+) + H(+) = 2 oxidized [nitric oxide reductase rubredoxin domain] + NADH. It functions in the pathway nitrogen metabolism; nitric oxide reduction. In terms of biological role, one of at least two accessory proteins for anaerobic nitric oxide (NO) reductase. Reduces the rubredoxin moiety of NO reductase. The sequence is that of Nitric oxide reductase FlRd-NAD(+) reductase from Escherichia coli O139:H28 (strain E24377A / ETEC).